The chain runs to 112 residues: CENP-A recruiting complex protein mis19 (112 aa).

In terms of assembly, component of the CENP-A recruiting complex composed of at least mis16, mis19, mis19 and mis20.

The protein resides in the chromosome. The protein localises to the centromere. Its subcellular location is the kinetochore. Functionally, component of the CENP-A recruiting complex that ensures the integrity of mitotic spindles through maintenance of kinetochore factors mis6/CENP-I and cnp1/CENP-A. Links mis16 and mis18 to recruit CENP-A through interacting with non-sense-mediated mRNA decay (NMD) factors and the SWI/SNF complex. Also links mis18 with the CCAN/mis6/ctf19 complex to promote CENP-A assembly. The protein is CENP-A recruiting complex protein mis19 of Schizosaccharomyces pombe (strain 972 / ATCC 24843) (Fission yeast).